The following is a 149-amino-acid chain: MERTFIMVKPDGVQRGLVGEIISRFEKRGFKLVGLKLMQISRELAETHYGEHKGKPFFEGLLNFITSGPVVAMVWEGKEVIATAREMMGATNPLKAQPGTIRGTYGIDVGRNVIHGSDSPESAAREIALFFKEEELLSYEKTLDTWIYE.

The ATP site is built by lysine 9, phenylalanine 57, arginine 85, threonine 91, arginine 102, and asparagine 112. Residue histidine 115 is the Pros-phosphohistidine intermediate of the active site.

This sequence belongs to the NDK family. As to quaternary structure, homotetramer. Requires Mg(2+) as cofactor.

The protein localises to the cytoplasm. It carries out the reaction a 2'-deoxyribonucleoside 5'-diphosphate + ATP = a 2'-deoxyribonucleoside 5'-triphosphate + ADP. The enzyme catalyses a ribonucleoside 5'-diphosphate + ATP = a ribonucleoside 5'-triphosphate + ADP. Major role in the synthesis of nucleoside triphosphates other than ATP. The ATP gamma phosphate is transferred to the NDP beta phosphate via a ping-pong mechanism, using a phosphorylated active-site intermediate. This Carboxydothermus hydrogenoformans (strain ATCC BAA-161 / DSM 6008 / Z-2901) protein is Nucleoside diphosphate kinase.